Here is a 298-residue protein sequence, read N- to C-terminus: Protease HtpX (298 aa).

Helical transmembrane passes span 4 to 24 (IGLF…TMNL) and 38 to 58 (LGNL…VSLA). A Zn(2+)-binding site is contributed by histidine 145. Glutamate 146 is a catalytic residue. Position 149 (histidine 149) interacts with Zn(2+). 2 helical membrane-spanning segments follow: residues 160 to 180 (LLQG…AYVV) and 194 to 214 (ITFI…ASMI). Glutamate 223 contributes to the Zn(2+) binding site.

The protein belongs to the peptidase M48B family. Requires Zn(2+) as cofactor.

The protein resides in the cell inner membrane. The polypeptide is Protease HtpX (Hydrogenovibrio crunogenus (strain DSM 25203 / XCL-2) (Thiomicrospira crunogena)).